Here is a 1074-residue protein sequence, read N- to C-terminus: Telomerase reverse transcriptase (1074 aa).

Residues 240–265 (DKVSCETMQDGESGKTTLVQKQPGSK) are disordered. Residues 253-262 (GKTTLVQKQP) show a composition bias toward polar residues. A TFLY; involved in RNA binding motif is present at residues 300–305 (TLGFLY). Interaction with RNA template regions lie at residues 355-360 (LPRRFF) and 461-486 (WKIKVNNCDWLKISKTGRVPPSELSY). In terms of domain architecture, Reverse transcriptase spans 552–877 (TPDQVAALPK…CLFPWCGLLL (326 aa)). Asp649, Asp810, and Asp811 together coordinate Mg(2+).

The protein belongs to the reverse transcriptase family. Telomerase subfamily. As to quaternary structure, catalytic subunit of the telomerase holoenzyme complex composed minimally of TERT and the telomerase RNA template component (TERC). In terms of tissue distribution, detected at highest levels in gill, ovary and testis, and at lower levels in brain, eye, heart, skin, spleen and stomach.

The protein localises to the nucleus. It localises to the chromosome. Its subcellular location is the telomere. It carries out the reaction DNA(n) + a 2'-deoxyribonucleoside 5'-triphosphate = DNA(n+1) + diphosphate. Its function is as follows. Telomerase is a ribonucleoprotein enzyme essential for the replication of chromosome termini in most eukaryotes. It elongates telomeres. It is a reverse transcriptase that adds simple sequence repeats to chromosome ends by copying a template sequence within the RNA component of the enzyme. This chain is Telomerase reverse transcriptase, found in Takifugu rubripes (Japanese pufferfish).